A 265-amino-acid polypeptide reads, in one-letter code: Mlc titration factor A (265 aa).

Zn(2+) contacts are provided by His-111, His-148, His-152, and Glu-211.

Belongs to the MtfA family. Interacts with Mlc. Zn(2+) serves as cofactor.

The protein localises to the cytoplasm. Functionally, involved in the modulation of the activity of the glucose-phosphotransferase system (glucose-PTS). Interacts with the transcriptional repressor Mlc, preventing its interaction with DNA and leading to the modulation of expression of genes regulated by Mlc, including ptsG, which encodes the PTS system glucose-specific EIICB component. In terms of biological role, shows zinc-dependent metallopeptidase activity. The chain is Mlc titration factor A from Escherichia coli O17:K52:H18 (strain UMN026 / ExPEC).